The chain runs to 331 residues: Glyceraldehyde-3-phosphate dehydrogenase (331 aa).

Residues 12 to 13 (RI), aspartate 34, arginine 78, and threonine 120 each bind NAD(+). N6-acetyllysine is present on residues lysine 132 and lysine 138. D-glyceraldehyde 3-phosphate-binding positions include 149-151 (SCT) and threonine 180. Cysteine 150 (nucleophile) is an active-site residue. Lysine 192 carries the post-translational modification N6-acetyllysine. D-glyceraldehyde 3-phosphate contacts are provided by residues 209-210 (TG) and arginine 232. The residue at position 249 (lysine 249) is an N6-acetyllysine. Asparagine 314 is a binding site for NAD(+).

This sequence belongs to the glyceraldehyde-3-phosphate dehydrogenase family. In terms of assembly, homotetramer.

The protein resides in the cytoplasm. It catalyses the reaction D-glyceraldehyde 3-phosphate + phosphate + NAD(+) = (2R)-3-phospho-glyceroyl phosphate + NADH + H(+). Its pathway is carbohydrate degradation; glycolysis; pyruvate from D-glyceraldehyde 3-phosphate: step 1/5. Functionally, catalyzes the oxidative phosphorylation of glyceraldehyde 3-phosphate (G3P) to 1,3-bisphosphoglycerate (BPG) using the cofactor NAD. The first reaction step involves the formation of a hemiacetal intermediate between G3P and a cysteine residue, and this hemiacetal intermediate is then oxidized to a thioester, with concomitant reduction of NAD to NADH. The reduced NADH is then exchanged with the second NAD, and the thioester is attacked by a nucleophilic inorganic phosphate to produce BPG. The sequence is that of Glyceraldehyde-3-phosphate dehydrogenase (gapA) from Escherichia coli O6:H1 (strain CFT073 / ATCC 700928 / UPEC).